A 418-amino-acid chain; its full sequence is Beta-2 adrenergic receptor (418 aa).

The Extracellular portion of the chain corresponds to 1 to 34 (MGQPGNRSVFLLAPNGSHAPDQDVPQERDEAWVV). N-linked (GlcNAc...) asparagine glycans are attached at residues Asn6 and Asn15. Residues 35–58 (GMAIVMSLIVLAIVFGNVLVITAI) traverse the membrane as a helical segment. The Cytoplasmic segment spans residues 59–71 (AKFERLQTVTNYF). A helical transmembrane segment spans residues 72-95 (ITSLACADLVMGLAVVPFGASHIL). Residues 96–106 (MKMWTFGSFWC) lie on the Extracellular side of the membrane. 2 cysteine pairs are disulfide-bonded: Cys106–Cys191 and Cys184–Cys190. Residues 107 to 129 (EFWISIDVLCVTASIETLCVIAV) form a helical membrane-spanning segment. The Cytoplasmic portion of the chain corresponds to 130-150 (DRYLAITSPFKYQCLLTKNKA). Tyr141 carries the post-translational modification Phosphotyrosine. A helical transmembrane segment spans residues 151–174 (RVVILMVWVVSGLISFLPIKMHWY). The Extracellular segment spans residues 175-196 (QATHREALNCYAEEACCDFFTN). Residues 197–220 (QPYAIASSIVSFYLPLVVMVFVYS) traverse the membrane as a helical segment. The Cytoplasmic portion of the chain corresponds to 221 to 274 (RVFQVARRQLQKIDKSEGRFHAQNLSQAEQDGRSGPGHRRSSKFCLKEHKALKT). Residue Ser246 is modified to Phosphoserine. 2 positions are modified to phosphoserine; by PKA: Ser261 and Ser262. Cys265 carries S-palmitoyl cysteine lipidation. The chain crosses the membrane as a helical span at residues 275-298 (LGIIMGTFTLCWLPFFIVNIVHGI). At 299-305 (HDNLIPK) the chain is on the extracellular side. A helical membrane pass occupies residues 306–329 (EVYILLNWVGYVNSAFNPLIYCRS). At 330–418 (PDFRMAFQEL…RNCSTNDSML (89 aa)) the chain is on the cytoplasmic side. Cys341 is lipidated: S-palmitoyl cysteine. A phosphoserine; by PKA mark is found at Ser345 and Ser346. A phosphoserine; by BARK mark is found at Ser355 and Ser356. The segment at 381–418 (RLCEDAPGPEGCAHRQGTVPDDSTDSQGRNCSTNDSML) is disordered. A 4-hydroxyproline mark is found at Pro387 and Pro400. Residues 405–418 (DSQGRNCSTNDSML) are compositionally biased toward polar residues. The PDZ-binding motif lies at 415-418 (DSML).

Belongs to the G-protein coupled receptor 1 family. Adrenergic receptor subfamily. ADRB2 sub-subfamily. Binds NHERF1 and GPRASP1. Interacts with ARRB1 and ARRB2. Interacts with SRC. Interacts with USP20 and USP33. Interacts with VHL; the interaction, which is increased on hydroxylation of ADRB2, ubiquitinates ADRB2 leading to its degradation. Interacts with EGLN3; the interaction hydroxylates ADRB2 facilitating VHL-E3 ligase-mediated ubiquitination. Interacts (via PDZ-binding motif) with SNX27 (via PDZ domain); the interaction is required when endocytosed to prevent degradation in lysosomes and promote recycling to the plasma membrane. Interacts with CNIH4. Interacts with ARRDC3. Interacts with NEDD4. Interacts with MARCHF2. Palmitoylated; may reduce accessibility of Ser-345 and Ser-346 by anchoring Cys-341 to the plasma membrane. Agonist stimulation promotes depalmitoylation and further allows Ser-345 and Ser-346 phosphorylation. Post-translationally, phosphorylated by PKA and BARK upon agonist stimulation, which mediates homologous desensitization of the receptor. PKA-mediated phosphorylation seems to facilitate phosphorylation by BARK. In terms of processing, phosphorylation of Tyr-141 is induced by insulin and leads to supersensitization of the receptor. Polyubiquitinated. Agonist-induced ubiquitination leads to sort internalized receptors to the lysosomes for degradation. Deubiquitination by USP20 and USP33, leads to ADRB2 recycling and resensitization after prolonged agonist stimulation. USP20 and USP33 are constitutively associated and are dissociated immediately after agonist stimulation. Ubiquitination by the VHL-E3 ligase complex is oxygen-dependent. Post-translationally, hydroxylation by EGLN3 occurs only under normoxia and increases the interaction with VHL and the subsequent ubiquitination and degradation of ADRB2. In terms of processing, palmitoylated. Mainly palmitoylated at Cys-341. Palmitoylation may reduce accessibility of phosphorylation sites by anchoring the receptor to the plasma membrane. Agonist stimulation promotes depalmitoylation and further allows Ser-345 and Ser-346 phosphorylation. Also undergoes transient, ligand-induced palmitoylation at Cys-265 probably by ZDHHC9, ZDHHC14 and ZDHHC18 within the Golgi. Palmitoylation at Cys-265 requires phosphorylation by PKA and receptor internalization and stabilizes the receptor. Could be depalmitoylated by LYPLA1 at the plasma membrane. Expressed in heart, liver, lung, skeletal muscle and subcutaneous adipose tissue.

The protein resides in the cell membrane. It is found in the early endosome. The protein localises to the golgi apparatus. Functionally, beta-adrenergic receptors mediate the catecholamine-induced activation of adenylate cyclase through the action of G proteins. The beta-2-adrenergic receptor binds epinephrine with an approximately 30-fold greater affinity than it does norepinephrine. This Sus scrofa (Pig) protein is Beta-2 adrenergic receptor (ADRB2).